The following is a 241-amino-acid chain: Enterotoxin type H (241 aa).

Positions 1 to 24 are cleaved as a signal peptide; it reads MINKIKILFSFLALLLSFTSYAKA. Cysteines 106 and 116 form a disulfide. Positions 191, 230, and 232 each coordinate Zn(2+).

This sequence belongs to the staphylococcal/streptococcal toxin family. As to quaternary structure, interacts with host MHC class II molecules composed of alpha/HLA-DRA and beta/HLA-DRB1 chains. Interacts with host TCR alpha-chain TRAV27. Zn(2+) serves as cofactor.

It localises to the secreted. In terms of biological role, staphylococcal enterotoxin that activates the host immune system by binding as unprocessed molecules to major histocompatibility (MHC) complex class II and T-cell receptor (TCR) molecules via their alpha domain, in particular TRAV27. In turn, this ternary complex activates a large number of T-lymphocytes initiating a systemic release of pro-inflammatory cytokines. Also causes the intoxication staphylococcal food poisoning syndrome. The illness characterized by high fever, hypotension, diarrhea, shock, and in some cases death. The protein is Enterotoxin type H (entH) of Staphylococcus aureus.